A 168-amino-acid chain; its full sequence is Phosphopantetheine adenylyltransferase (168 aa).

Substrate is bound at residue T14. ATP is bound by residues 14 to 15 (TF) and H22. The substrate site is built by K46, L78, and R92. Residues 93-95 (GLR), E103, and 128-134 (YSFISSS) contribute to the ATP site.

It belongs to the bacterial CoaD family. In terms of assembly, homohexamer. Mg(2+) serves as cofactor.

It localises to the cytoplasm. The catalysed reaction is (R)-4'-phosphopantetheine + ATP + H(+) = 3'-dephospho-CoA + diphosphate. The protein operates within cofactor biosynthesis; coenzyme A biosynthesis; CoA from (R)-pantothenate: step 4/5. In terms of biological role, reversibly transfers an adenylyl group from ATP to 4'-phosphopantetheine, yielding dephospho-CoA (dPCoA) and pyrophosphate. The protein is Phosphopantetheine adenylyltransferase of Xanthomonas euvesicatoria pv. vesicatoria (strain 85-10) (Xanthomonas campestris pv. vesicatoria).